We begin with the raw amino-acid sequence, 331 residues long: Glycerol-3-phosphate dehydrogenase [NAD(P)+] (331 aa).

Residues tryptophan 14, arginine 34, and lysine 107 each coordinate NADPH. Sn-glycerol 3-phosphate contacts are provided by lysine 107, glycine 135, and serine 137. Alanine 139 contributes to the NADPH binding site. Sn-glycerol 3-phosphate is bound by residues lysine 190, aspartate 243, serine 253, arginine 254, and asparagine 255. Catalysis depends on lysine 190, which acts as the Proton acceptor. Arginine 254 lines the NADPH pocket. 2 residues coordinate NADPH: valine 278 and glutamate 280.

The protein belongs to the NAD-dependent glycerol-3-phosphate dehydrogenase family.

The protein resides in the cytoplasm. It catalyses the reaction sn-glycerol 3-phosphate + NAD(+) = dihydroxyacetone phosphate + NADH + H(+). The enzyme catalyses sn-glycerol 3-phosphate + NADP(+) = dihydroxyacetone phosphate + NADPH + H(+). It participates in membrane lipid metabolism; glycerophospholipid metabolism. In terms of biological role, catalyzes the reduction of the glycolytic intermediate dihydroxyacetone phosphate (DHAP) to sn-glycerol 3-phosphate (G3P), the key precursor for phospholipid synthesis. This Caulobacter vibrioides (strain ATCC 19089 / CIP 103742 / CB 15) (Caulobacter crescentus) protein is Glycerol-3-phosphate dehydrogenase [NAD(P)+].